Consider the following 261-residue polypeptide: Ribosome biogenesis protein C3_06160C_A (261 aa).

The tract at residues 1 to 38 is disordered; that stretch reads MPQNEYIEQHIKKHGRRLDYEERKRKKEAREGHRVAKD. 2 consecutive short sequence motifs (nuclear localization signal) follow at residues 11–18 and 51–58; these read IKKHGRRL and AKKRYAEK. A compositionally biased stretch (basic and acidic residues) spans 17-37; sequence RLDYEERKRKKEAREGHRVAK. The tract at residues 59-85 is disordered; it reads VAMKKKIKAHQESKVKGPSTPKAEDGE.

The protein belongs to the eukaryotic ribosomal protein eS8 family. Ribosome biogenesis protein NSA2 subfamily. As to quaternary structure, component of the pre-66S ribosomal particle. Interacts with NOP7 and RRP1. Interacts with RSA4 (via WD repeats).

The protein resides in the nucleus. Its subcellular location is the nucleolus. In terms of biological role, involved in the biogenesis of the 60S ribosomal subunit. May play a part in the quality control of pre-60S particles. This chain is Ribosome biogenesis protein C3_06160C_A, found in Candida albicans (strain SC5314 / ATCC MYA-2876) (Yeast).